The chain runs to 35 residues: GLTRPSKRCLAGSAPCEFHRGYTCCSGHCLIWVCA.

A propeptide spanning residues 1–8 (GLTRPSKR) is cleaved from the precursor. 3 disulfides stabilise this stretch: Cys-9–Cys-25, Cys-16–Cys-29, and Cys-24–Cys-34.

This sequence belongs to the conotoxin O1 superfamily. As to expression, expressed by the venom duct.

The protein resides in the secreted. In terms of biological role, probable neurotoxin with unknown target. Possibly targets ion channels. The sequence is that of Conotoxin Cal6.1d from Californiconus californicus (California cone).